The chain runs to 854 residues: DNA mismatch repair protein MutS (854 aa).

615-622 (GPNMGGKS) serves as a coordination point for ATP.

The protein belongs to the DNA mismatch repair MutS family.

Its function is as follows. This protein is involved in the repair of mismatches in DNA. It is possible that it carries out the mismatch recognition step. This protein has a weak ATPase activity. This Proteus mirabilis (strain HI4320) protein is DNA mismatch repair protein MutS.